The chain runs to 321 residues: Glucokinase (321 aa).

8–13 (GDVGGT) contributes to the ATP binding site.

The protein belongs to the bacterial glucokinase family.

It is found in the cytoplasm. It catalyses the reaction D-glucose + ATP = D-glucose 6-phosphate + ADP + H(+). The polypeptide is Glucokinase (Escherichia fergusonii (strain ATCC 35469 / DSM 13698 / CCUG 18766 / IAM 14443 / JCM 21226 / LMG 7866 / NBRC 102419 / NCTC 12128 / CDC 0568-73)).